A 505-amino-acid polypeptide reads, in one-letter code: Structural protein 27 (505 aa).

3 hydrophobic regions span residues 20–40 (VSLI…FSPV), 423–443 (MKGI…MSTI), and 470–490 (IGLG…LILV).

The protein localises to the virion. The chain is Structural protein 27 from His1 virus (isolate Australia/Victoria) (His1V).